Consider the following 358-residue polypeptide: Probable protein phosphatase 2C 68 (358 aa).

A PPM-type phosphatase domain is found at 74–352 (RHGAASVAGR…DNISVVVVDL (279 aa)). Mn(2+) is bound by residues Asp-117, Gly-118, Asp-298, and Asp-343.

Belongs to the PP2C family. Mg(2+) is required as a cofactor. The cofactor is Mn(2+).

The protein localises to the nucleus. It is found in the cytoplasm. It localises to the cytosol. The catalysed reaction is O-phospho-L-seryl-[protein] + H2O = L-seryl-[protein] + phosphate. The enzyme catalyses O-phospho-L-threonyl-[protein] + H2O = L-threonyl-[protein] + phosphate. Its function is as follows. Involved in the regulation of abiotic stress responses. Acts as a negative regulator of abscisic acid (ABA) signaling and positive regulator of abiotic stress signaling. May be involved in panicle development. This Oryza sativa subsp. japonica (Rice) protein is Probable protein phosphatase 2C 68.